Reading from the N-terminus, the 141-residue chain is ATP synthase epsilon chain (141 aa).

This sequence belongs to the ATPase epsilon chain family. In terms of assembly, F-type ATPases have 2 components, CF(1) - the catalytic core - and CF(0) - the membrane proton channel. CF(1) has five subunits: alpha(3), beta(3), gamma(1), delta(1), epsilon(1). CF(0) has three main subunits: a, b and c.

Its subcellular location is the cell inner membrane. Its function is as follows. Produces ATP from ADP in the presence of a proton gradient across the membrane. The polypeptide is ATP synthase epsilon chain (Burkholderia thailandensis (strain ATCC 700388 / DSM 13276 / CCUG 48851 / CIP 106301 / E264)).